We begin with the raw amino-acid sequence, 866 residues long: Ribosome biogenesis protein BOP1 homolog (866 aa).

Disordered stretches follow at residues 1-180 (MVAN…EETR) and 214-241 (PPEA…EEDI). Composition is skewed to acidic residues over residues 37-52 (VDDE…DEEN), 60-146 (GNDE…LEEP), and 167-179 (TAED…DEET). 6 WD repeats span residues 527 to 566 (GHTD…CIRT), 568 to 608 (PTGD…SLLV), 697 to 735 (KSKG…LLKK), 738 to 777 (PSCK…RPYQ), 781 to 820 (LHHS…DLLQ), and 836 to 866 (VNDF…RLYT).

Belongs to the WD repeat BOP1/ERB1 family.

The protein resides in the nucleus. Its subcellular location is the nucleolus. It localises to the nucleoplasm. Required for maturation of ribosomal RNAs and formation of the large ribosomal subunit. The protein is Ribosome biogenesis protein BOP1 homolog of Aedes aegypti (Yellowfever mosquito).